We begin with the raw amino-acid sequence, 753 residues long: MTISPPEREAKVRVTVDTDPVPTSFEKWGKPGHFSRSLARGPKTTTWIWNLHADAHDFDSHTSDLEDVSRKIFSAHFGHLAIIFVWLSGAYFHGAKFSNYEAWLADPTGIKPSAQVVWPVLGQGILNGDMGGGFHGIQITSGLFQLWRASGITNEYQLYCTAIGGLVMAALMMFAGWFHYHKKAPKLEWFQNVESMMNHHLAGLLGLGCLSWAGHQIHVSLPINKLLDSGVAPEDIPLPHEFLFNKSLMAELYPSFAKGLTPFFTLNWGEYADFLTFKGGLNPVTGGLWLSDTAHHHLALAVLFIVAGHMYRTNWGIGHSMKEILEAHKDPLIIGGEGHKGLYEALTTSWHAQLAINLAMLGSLSIIVAHHMYAMPPYPYIATDYPTQLSLFTHHMWIGGFLIVGAGAHGAIFMVRDYDPAKNVNNVLDRVIRHRDAIISHLNWVCIFLGFHSFGLYVHNDTLRALGRPQDMFSDTGIQLQPIFAQWVQNLHSLAPGNTAPNALASVSPIFGGDVLAVGGKVAMMPMTLGTADFMVHHIHAFTIHVTALILLKGVLYARNSRLIPDKSELGFRFPCDGPGRGGTCQVSGWDHVFLGLFWMYNSLSIVIFHFSWKMQSDVWGTVDPDGTVSHITYGNFAQSAVTINGWLRDFLWAQASNVITSYGSELSAYGLLFLGAHFIWAFSLMFLFSGRGYWQELIESIVWAHNKLKVAPAIQPRALSITQGRAVGVAHYLLGGIVTTWAFFLARIIAVG.

The next 8 membrane-spanning stretches (helical) occupy residues 72 to 95 (IFSA…FHGA), 158 to 181 (LYCT…FHYH), 197 to 221 (MNHH…HVSL), 293 to 311 (TAHH…GHMY), 350 to 373 (WHAQ…HHMY), 389 to 415 (LSLF…IFMV), 437 to 459 (AIIS…LYVH), and 534 to 552 (FMVH…LILL). Residues cysteine 576 and cysteine 585 each coordinate [4Fe-4S] cluster. The next 2 helical transmembrane spans lie at 592-613 (HVFL…HFSW) and 667-689 (LSAY…MFLF). A chlorophyll a'-binding site is contributed by histidine 678. Methionine 686 and tyrosine 694 together coordinate chlorophyll a. Tryptophan 695 contacts phylloquinone. A helical transmembrane segment spans residues 727–747 (AVGVAHYLLGGIVTTWAFFLA).

Belongs to the PsaA/PsaB family. The PsaA/B heterodimer binds the P700 chlorophyll special pair and subsequent electron acceptors. PSI consists of a core antenna complex that captures photons, and an electron transfer chain that converts photonic excitation into a charge separation. The cyanobacterial PSI reaction center is composed of one copy each of PsaA,B,C,D,E,F,I,J,K,L,M and X, and forms trimeric complexes. Requires PSI electron transfer chain: 5 chlorophyll a, 1 chlorophyll a', 2 phylloquinones and 3 4Fe-4S clusters. PSI core antenna: 90 chlorophyll a, 22 carotenoids, 3 phospholipids and 1 galactolipid. P700 is a chlorophyll a/chlorophyll a' dimer, A0 is one or more chlorophyll a, A1 is one or both phylloquinones and FX is a shared 4Fe-4S iron-sulfur center. as cofactor.

It localises to the cellular thylakoid membrane. It catalyses the reaction reduced [plastocyanin] + hnu + oxidized [2Fe-2S]-[ferredoxin] = oxidized [plastocyanin] + reduced [2Fe-2S]-[ferredoxin]. Its function is as follows. PsaA and PsaB bind P700, the primary electron donor of photosystem I (PSI), as well as the electron acceptors A0, A1 and FX. PSI is a plastocyanin/cytochrome c6-ferredoxin oxidoreductase, converting photonic excitation into a charge separation, which transfers an electron from the donor P700 chlorophyll pair to the spectroscopically characterized acceptors A0, A1, FX, FA and FB in turn. Oxidized P700 is reduced on the lumenal side of the thylakoid membrane by plastocyanin or cytochrome c6. This chain is Photosystem I P700 chlorophyll a apoprotein A1, found in Trichodesmium erythraeum (strain IMS101).